A 599-amino-acid chain; its full sequence is Sulfite reductase [NADPH] flavoprotein alpha-component (599 aa).

Residues 64-202 (ITIISASQTG…AASEWRARVV (139 aa)) form the Flavodoxin-like domain. Residues 70–75 (SQTGNA), 117–120 (STQG), and 153–162 (LGDSSYEFFC) each bind FMN. Residues 234–448 (DAPLAASLSV…IEHNDNFRLP (215 aa)) enclose the FAD-binding FR-type domain. FAD contacts are provided by residues T322, A356, 386–389 (RLYS), 404–406 (TVG), Y410, and 419–422 (GGAS). Residues 519 to 520 (SR), 525 to 529 (KIYVQ), and D561 contribute to the NADP(+) site. Y599 is a binding site for FAD.

This sequence belongs to the NADPH-dependent sulphite reductase flavoprotein subunit CysJ family. It in the N-terminal section; belongs to the flavodoxin family. In the C-terminal section; belongs to the flavoprotein pyridine nucleotide cytochrome reductase family. In terms of assembly, alpha(8)-beta(8). The alpha component is a flavoprotein, the beta component is a hemoprotein. FAD is required as a cofactor. FMN serves as cofactor.

It catalyses the reaction hydrogen sulfide + 3 NADP(+) + 3 H2O = sulfite + 3 NADPH + 4 H(+). It functions in the pathway sulfur metabolism; hydrogen sulfide biosynthesis; hydrogen sulfide from sulfite (NADPH route): step 1/1. Its function is as follows. Component of the sulfite reductase complex that catalyzes the 6-electron reduction of sulfite to sulfide. This is one of several activities required for the biosynthesis of L-cysteine from sulfate. The flavoprotein component catalyzes the electron flow from NADPH -&gt; FAD -&gt; FMN to the hemoprotein component. The sequence is that of Sulfite reductase [NADPH] flavoprotein alpha-component from Escherichia coli O6:H1 (strain CFT073 / ATCC 700928 / UPEC).